A 2912-amino-acid chain; its full sequence is Fibrillin-2 (2912 aa).

Positions 1 to 28 (MGRRRRLCLQLYFLWLGCVVLWAQGTAG) are cleaved as a signal peptide. The disordered stretch occupies residues 27 to 52 (AGQPQPPPPKPPRPQPPPQQVRSATA). A propeptide spanning residues 29-77 (QPQPPPPKPPRPQPPPQQVRSATAGSEGGFLAPEYREEGAAVASRVRRR) is cleaved from the precursor. Positions 30-45 (PQPPPPKPPRPQPPPQ) are enriched in pro residues. 3 EGF-like domains span residues 111–142 (IVPI…STCG), 145–176 (SIQQ…TYCG), and 176–208 (GQPV…PQCE). Intrachain disulfides connect Cys115/Cys124, Cys119/Cys130, Cys132/Cys141, Cys149/Cys159, Cys153/Cys164, Cys166/Cys175, Cys180/Cys190, Cys184/Cys196, and Cys198/Cys207. Residues 149 to 359 (CSVRCMNGGT…VTSTDGSRCI (211 aa)) form an interaction with MFAP4 region. In terms of domain architecture, TB 1 spans 214–266 (GPCFTQVNNQMCQGQLTGIVCTKTLCCATIGRAWGHPCEMCPAQPQPCRRGFI). Residues 276–317 (DVDECQAIPGICQGGNCINTVGSFECRCPAGHKQSETTQKCE) form the EGF-like 4; calcium-binding domain. Cystine bridges form between Cys280/Cys292, Cys287/Cys301, Cys303/Cys316, Cys322/Cys334, Cys329/Cys343, and Cys345/Cys358. A glycan (O-linked (Glc) serine) is linked at Ser298. Positions 318–359 (DIDECSIIPGICETGECSNTVGSYFCVCPRGYVTSTDGSRCI) constitute an EGF-like 5; calcium-binding domain. O-linked (Glc) serine glycosylation occurs at Ser340. Residues 364–417 (GMCFSGLVNGRCAQELPGRMTKMQCCCEPGRCWGIGTIPEACPVRGSEEYRRLC) enclose the TB 2 domain. N-linked (GlcNAc...) asparagine glycosylation is present at Asn492. An EGF-like 6 domain is found at 494-534 (TIDICKHHANLCLNGRCIPTVSSYRCECNMGYKQDANGDCI). Cystine bridges form between Cys498–Cys510, Cys505–Cys519, Cys521–Cys533, Cys539–Cys549, Cys544–Cys558, Cys560–Cys573, Cys579–Cys591, Cys586–Cys600, Cys602–Cys615, Cys621–Cys632, Cys627–Cys641, Cys643–Cys656, Cys662–Cys673, Cys668–Cys682, and Cys684–Cys697. An O-linked (Glc) serine glycan is attached at Ser516. Residues 535–574 (DVDECTSNPCTNGDCVNTPGSYYCKCHAGFQRTPTKQACI) form the EGF-like 7; calcium-binding domain. Ser555 is a glycosylation site (O-linked (Glc) serine). The region spanning 575 to 616 (DIDECIQNGVLCKNGRCVNTDGSFQCICNAGFELTTDGKNCV) is the EGF-like 8; calcium-binding domain. O-linked (Glc) serine glycosylation occurs at Ser597. Residues 617–657 (DHDECTTTNMCLNGMCINEDGSFKCICKPGFVLAPNGRYCT) form the EGF-like 9; calcium-binding domain. An O-linked (Glc) serine glycan is attached at Ser638. One can recognise an EGF-like 10; calcium-binding domain in the interval 658 to 698 (DVDECQTPGICMNGHCINSEGSFRCDCPPGLAVGMDGRVCV). A glycan (O-linked (Glc) serine) is linked at Ser679. In terms of domain architecture, TB 3 spans 704-756 (STCYGGIKKGVCVRPFPGAVTKSECCCANPDYGFGEPCQPCPAKNSAEFHGLC). An EGF-like 11; calcium-binding domain is found at 768–809 (DINECALDPDICANGICENLRGSYRCNCNSGYEPDASGRNCI). 9 cysteine pairs are disulfide-bonded: Cys772–Cys784, Cys779–Cys793, Cys795–Cys808, Cys814–Cys826, Cys821–Cys835, Cys837–Cys850, Cys856–Cys866, Cys861–Cys875, and Cys877–Cys890. An EGF-like 12; calcium-binding domain is found at 810-851 (DIDECLVNRLLCDNGLCRNTPGSYSCTCPPGYVFRTETETCE). Ser832 carries an O-linked (Glc) serine glycan. An EGF-like 13; calcium-binding domain is found at 852–891 (DINECESNPCVNGACRNNLGSFNCECSPGSKLSSTGLICI). Ser872 carries an O-linked (Glc) serine glycan. The TB 4 domain occupies 896–947 (GTCWLNIQDSRCEVNINGATLKSECCATLGAAWGSPCERCELDTACPRGLAR). The 42-residue stretch at 955-996 (DVNECEVFPGVCPNGRCVNSKGSFHCECPEGLTLDGTGRVCL) folds into the EGF-like 14; calcium-binding domain. Cystine bridges form between Cys959–Cys971, Cys966–Cys980, and Cys982–Cys995. The O-linked (Glc) serine glycan is linked to Ser977. Residues 1001-1052 (EQCYLKWDEDECIHPVPGKFRMDACCCAVGAAWGTECEECPKPGTKEYETLC) enclose the TB 5 domain. In terms of domain architecture, EGF-like 15; calcium-binding spans 1073 to 1114 (DINECKAFPGMCTYGKCRNTIGSFKCRCNSGFALDMEERNCT). Disulfide bonds link Cys1077/Cys1089, Cys1084/Cys1098, Cys1100/Cys1113, Cys1119/Cys1131, Cys1126/Cys1140, Cys1142/Cys1156, Cys1162/Cys1174, Cys1169/Cys1183, Cys1185/Cys1198, Cys1204/Cys1216, Cys1211/Cys1225, Cys1227/Cys1240, Cys1246/Cys1257, Cys1253/Cys1266, Cys1268/Cys1281, Cys1287/Cys1299, Cys1294/Cys1308, Cys1310/Cys1323, Cys1329/Cys1341, Cys1336/Cys1350, Cys1352/Cys1365, Cys1371/Cys1384, Cys1378/Cys1393, Cys1395/Cys1406, Cys1412/Cys1425, Cys1419/Cys1434, Cys1436/Cys1447, Cys1453/Cys1465, Cys1460/Cys1474, Cys1476/Cys1489, Cys1495/Cys1506, Cys1501/Cys1515, Cys1517/Cys1530, Cys1536/Cys1547, Cys1542/Cys1556, and Cys1558/Cys1571. O-linked (Glc) serine glycosylation occurs at Ser1095. N-linked (GlcNAc...) asparagine glycosylation is present at Asn1112. The EGF-like 16; calcium-binding domain occupies 1115–1157 (DIDECRISPDLCGSGICVNTPGSFECECFEGYESGFMMMKNCM). Residues 1158–1199 (DIDECERNPLLCRGGTCVNTEGSFQCDCPLGHELSPSREDCV) form the EGF-like 17; calcium-binding domain. Ser1180 carries O-linked (Glc) serine glycosylation. An EGF-like 18; calcium-binding domain is found at 1200 to 1241 (DINECSLSDNLCRNGKCVNMIGTYQCSCNPGYQATPDRQGCT). The O-linked (Glc) threonine glycan is linked to Thr1222. The EGF-like 19; calcium-binding domain occupies 1242–1282 (DIDECMIMNGGCDTQCTNSEGSYECSCSEGYALMPDGRSCA). O-linked (Glc) serine glycosylation is present at Ser1263. Residues 1283-1324 (DIDECENNPDICDGGQCTNIPGEYRCLCYDGFMASMDMKTCI) form the EGF-like 20; calcium-binding domain. In terms of domain architecture, EGF-like 21; calcium-binding spans 1325–1366 (DVNECDLNSNICMFGECENTKGSFICHCQLGYSVKKGTTGCT). A glycan (O-linked (Glc) serine) is linked at Ser1347. The EGF-like 22; calcium-binding domain occupies 1367-1407 (DVDECEIGAHNCDMHASCLNIPGSFKCSCREGWIGNGIKCI). Ser1390 carries an O-linked (Glc) serine glycan. Positions 1408-1448 (DLDECSNGTHQCSINAQCVNTPGSYRCACSEGFTGDGFTCS) constitute an EGF-like 23; calcium-binding domain. N-linked (GlcNAc...) asparagine glycosylation is present at Asn1414. Positions 1449 to 1490 (DVDECAENINLCENGQCLNVPGAYRCECEMGFTPASDSRSCQ) constitute an EGF-like 24; calcium-binding domain. The region spanning 1491-1531 (DIDECSFQNICVFGTCNNLPGMFHCICDDGYELDRTGGNCT) is the EGF-like 25; calcium-binding domain. A glycan (N-linked (GlcNAc...) asparagine) is linked at Asn1529. The region spanning 1532–1572 (DIDECADPINCVNGLCVNTPGRYECNCPPDFQLNPTGVGCV) is the EGF-like 26; calcium-binding domain. The region spanning 1577–1633 (GNCYLKFGPRGDGSLSCNTEIGVGVSRSSCCCSLGKAWGNPCETCPPVNSTEYYTLC) is the TB 6 domain. Asn1625 is a glycosylation site (N-linked (GlcNAc...) asparagine). Residues 1650–1691 (DIDECQELPGLCQGGNCINTFGSFQCECPQGYYLSEDTRICE) form the EGF-like 27; calcium-binding domain. 6 disulfide bridges follow: Cys1654–Cys1666, Cys1661–Cys1675, Cys1677–Cys1690, Cys1696–Cys1708, Cys1703–Cys1717, and Cys1719–Cys1732. A glycan (O-linked (Glc) serine) is linked at Ser1672. An EGF-like 28; calcium-binding domain is found at 1692–1733 (DIDECFAHPGVCGPGTCYNTLGNYTCICPPEYMQVNGGHNCM). Asn1714 is a glycosylation site (N-linked (GlcNAc...) asparagine). Positions 1735–2171 (MRKSFCYRSY…VPSLHDTRED (437 aa)) are interaction with MFAP4. The region spanning 1738–1791 (SFCYRSYNGTTCENELPFNVTKRMCCCTYNVGKAWNKPCEPCPTPGTADFKTIC) is the TB 7 domain. Residues Asn1745 and Asn1756 are each glycosylated (N-linked (GlcNAc...) asparagine). The 42-residue stretch at 1808–1849 (DIDECKEIPGICANGVCINQIGSFRCECPTGFSYNDLLLVCE) folds into the EGF-like 29; calcium-binding domain. Intrachain disulfides connect Cys1812-Cys1824, Cys1819-Cys1833, Cys1835-Cys1848, Cys1854-Cys1867, Cys1861-Cys1876, Cys1878-Cys1890, Cys1896-Cys1908, Cys1903-Cys1917, Cys1919-Cys1932, Cys1938-Cys1948, Cys1943-Cys1957, Cys1959-Cys1971, Cys1977-Cys1990, Cys1985-Cys1999, Cys2001-Cys2014, Cys2020-Cys2032, Cys2027-Cys2041, Cys2043-Cys2054, Cys2060-Cys2072, Cys2067-Cys2081, and Cys2083-Cys2096. The 42-residue stretch at 1850–1891 (DIDECSNGDNLCQRNADCINSPGSYRCECAAGFKLSPNGACV) folds into the EGF-like 30; calcium-binding domain. Ser1873 carries O-linked (Glc) serine glycosylation. The EGF-like 31; calcium-binding domain occupies 1892–1933 (DRNECLEIPNVCSHGLCVDLQGSYQCICHNGFKASQDQTMCM). The EGF-like 32; calcium-binding domain maps to 1934-1972 (DVDECERHPCGNGTCKNTVGSYNCLCYPGFELTHNNDCL). The N-linked (GlcNAc...) asparagine glycan is linked to Asn1945. O-linked (Glc) serine glycosylation is present at Ser1954. One can recognise an EGF-like 33; calcium-binding domain in the interval 1973-2015 (DIDECSSFFGQVCRNGRCFNEIGSFKCLCNEGYELTPDGKNCI). Residue Ser1996 is glycosylated (O-linked (Glc) serine). In terms of domain architecture, EGF-like 34; calcium-binding spans 2016-2055 (DTNECVALPGSCSPGTCQNLEGSFRCICPPGYEVKSENCI). Residues 2056 to 2097 (DINECDEDPNICLFGSCTNTPGGFQCLCPPGFVLSDNGRRCF) enclose the EGF-like 35; calcium-binding domain. One can recognise a TB 8 domain in the interval 2102-2155 (SFCFTNFENGKCSVPKAFNTTKAKCCCSKMPGEGWGDPCELCPKDDEVAFQDLC). N-linked (GlcNAc...) asparagine glycosylation is present at Asn2120. The EGF-like 36; calcium-binding domain maps to 2171–2212 (DVNECLESPGICSNGQCINTDGSFRCECPMGYNLDYTGVRCV). Intrachain disulfides connect Cys2175-Cys2187, Cys2182-Cys2196, Cys2198-Cys2211, Cys2217-Cys2228, Cys2223-Cys2237, Cys2239-Cys2251, Cys2257-Cys2268, Cys2264-Cys2277, Cys2279-Cys2292, Cys2298-Cys2312, Cys2305-Cys2321, Cys2323-Cys2336, Cys2342-Cys2354, Cys2349-Cys2363, and Cys2365-Cys2378. Ser2193 carries O-linked (Glc) serine glycosylation. An EGF-like 37; calcium-binding domain is found at 2213-2252 (DTDECSIGNPCGNGTCTNVIGSFECNCNEGFEPGPMMNCE). An N-linked (GlcNAc...) asparagine glycan is attached at Asn2225. In terms of domain architecture, EGF-like 38; calcium-binding spans 2253-2293 (DINECAQNPLLCAFRCMNTFGSYECTCPIGYALREDQKMCK). Residue Ser2274 is glycosylated (O-linked (Glc) serine). Residues 2294–2337 (DLDECAEGLHDCESRGMMCKNLIGTFMCICPPGMARRPDGEGCV) enclose the EGF-like 39; calcium-binding domain. Residues 2338–2379 (DENECRTKPGICENGRCVNIIGSYRCECNEGFQSSSSGTECL) form the EGF-like 40; calcium-binding domain. A glycan (O-linked (Glc) serine) is linked at Ser2360. The region spanning 2384-2437 (GLCFAEVLQTICQMASSSRNLVTKSECCCDGGRGWGHQCELCPLPGTAQYKKIC) is the TB 9 domain. The EGF-like 41; calcium-binding domain occupies 2449 to 2490 (DIDECKVMPNLCTNGQCINTMGSFRCFCKVGYTTDISGTSCI). Disulfide bonds link Cys2453–Cys2465, Cys2460–Cys2474, Cys2476–Cys2489, Cys2495–Cys2506, Cys2502–Cys2515, Cys2517–Cys2530, Cys2536–Cys2547, Cys2543–Cys2556, Cys2558–Cys2569, Cys2575–Cys2588, Cys2582–Cys2597, Cys2599–Cys2612, Cys2618–Cys2628, Cys2624–Cys2637, Cys2639–Cys2652, Cys2658–Cys2669, Cys2664–Cys2678, Cys2680–Cys2693, Cys2699–Cys2710, Cys2706–Cys2719, and Cys2721–Cys2733. A glycan (O-linked (Glc) serine) is linked at Ser2471. In terms of domain architecture, EGF-like 42; calcium-binding spans 2491–2531 (DLDECSQSPKPCNYICKNTEGSYQCSCPRGYVLQEDGKTCK). Ser2512 carries an O-linked (Glc) serine glycan. The 39-residue stretch at 2532–2570 (DLDECQTKQHNCQFLCVNTLGGFTCKCPPGFTQHHTACI) folds into the EGF-like 43; calcium-binding domain. The region spanning 2571–2613 (DNNECGSQPSLCGAKGICQNTPGSFSCECQRGFSLDATGLNCE) is the EGF-like 44; calcium-binding domain. A glycan (O-linked (Glc) serine) is linked at Ser2594. Residues 2614–2653 (DVDECDGNHRCQHGCQNILGGYRCGCPQGYIQHYQWNQCV) enclose the EGF-like 45; calcium-binding domain. In terms of domain architecture, EGF-like 46; calcium-binding spans 2654 to 2694 (DENECSNPNACGSASCYNTLGSYKCACPSGFSFDQFSSACH). An O-linked (Glc) serine glycan is attached at Ser2675. Positions 2695-2734 (DVNECSSSKNPCNYGCSNTEGGYLCGCPPGYYRVGQGHCV) constitute an EGF-like 47; calcium-binding domain. Asn2808 carries N-linked (GlcNAc...) asparagine glycosylation.

This sequence belongs to the fibrillin family. In terms of assembly, interacts with BMP2, BMP4, BMP7, BMP10 and GDF5. Interacts with MFAP2 and MFAP5. Interacts with ADAMTSL5. Interacts with MFAP4. In terms of processing, N-glycosylated. Post-translationally, O-glycosylated on serine residues by POGLUT2 and POGLUT3. Almost exclusively expressed in placenta. Expressed at much lower level in other tissues. Expressed in fetal eye (18 weeks)in the retinal pigment epithelium (RPE), the choroid, Bruch's membrane and in the sclera. Not expressed in the neural retina. In terms of tissue distribution, present at high level in cytotrophoblasts as compared with syncytiotrophoblasts at 8-9 weeks of pregnancy (at protein level). Levels in the serum increase during pregnancy (at protein level).

The protein resides in the secreted. It is found in the extracellular space. The protein localises to the extracellular matrix. Fibrillins are structural components of 10-12 nm extracellular calcium-binding microfibrils, which occur either in association with elastin or in elastin-free bundles. Fibrillin-2-containing microfibrils regulate the early process of elastic fiber assembly. Regulates osteoblast maturation by controlling TGF-beta bioavailability and calibrating TGF-beta and BMP levels, respectively. Functionally, hormone secreted by trophoblasts that promotes trophoblast invasiveness. Has glucogenic activity: is able to increase plasma glucose levels. This Homo sapiens (Human) protein is Fibrillin-2.